The following is a 270-amino-acid chain: 4-hydroxy-tetrahydrodipicolinate reductase (270 aa).

Residues 8–13 (GALGRM), D34, 102–104 (GTT), and 128–131 (SQNY) contribute to the NAD(+) site. H160 functions as the Proton donor/acceptor in the catalytic mechanism. A (S)-2,3,4,5-tetrahydrodipicolinate-binding site is contributed by H161. Residue K164 is the Proton donor of the active site. 170 to 171 (GT) contacts (S)-2,3,4,5-tetrahydrodipicolinate.

Belongs to the DapB family.

It is found in the cytoplasm. It catalyses the reaction (S)-2,3,4,5-tetrahydrodipicolinate + NAD(+) + H2O = (2S,4S)-4-hydroxy-2,3,4,5-tetrahydrodipicolinate + NADH + H(+). It carries out the reaction (S)-2,3,4,5-tetrahydrodipicolinate + NADP(+) + H2O = (2S,4S)-4-hydroxy-2,3,4,5-tetrahydrodipicolinate + NADPH + H(+). The protein operates within amino-acid biosynthesis; L-lysine biosynthesis via DAP pathway; (S)-tetrahydrodipicolinate from L-aspartate: step 4/4. Catalyzes the conversion of 4-hydroxy-tetrahydrodipicolinate (HTPA) to tetrahydrodipicolinate. This Methanococcus maripaludis (strain DSM 14266 / JCM 13030 / NBRC 101832 / S2 / LL) protein is 4-hydroxy-tetrahydrodipicolinate reductase.